The chain runs to 145 residues: Large-conductance mechanosensitive channel (145 aa).

Helical transmembrane passes span 10–30, 41–61, and 87–107; these read FALK…GAFA, IMPI…MFLI, and GNFI…FMMV.

This sequence belongs to the MscL family. Homopentamer.

It is found in the cell inner membrane. Functionally, channel that opens in response to stretch forces in the membrane lipid bilayer. May participate in the regulation of osmotic pressure changes within the cell. This is Large-conductance mechanosensitive channel from Psychrobacter arcticus (strain DSM 17307 / VKM B-2377 / 273-4).